We begin with the raw amino-acid sequence, 131 residues long: Dihydroneopterin aldolase 2 (131 aa).

Residues Glu-29, Tyr-61, and 80–81 contribute to the substrate site; that span reads LE. The Proton donor/acceptor role is filled by Lys-107.

This sequence belongs to the DHNA family. Homooctamer. Forms a hollow cylinder assembled from two ring-shaped tetramers. Expressed in roots, leaves, stems and siliques.

It catalyses the reaction 7,8-dihydroneopterin = 6-hydroxymethyl-7,8-dihydropterin + glycolaldehyde. It functions in the pathway cofactor biosynthesis; tetrahydrofolate biosynthesis; 2-amino-4-hydroxy-6-hydroxymethyl-7,8-dihydropteridine diphosphate from 7,8-dihydroneopterin triphosphate: step 3/4. Its function is as follows. Catalyzes the conversion of 7,8-dihydroneopterin into 6-hydroxymethyl-7,8-dihydropterin, a biosynthetic precursor of the vitamin tetrahydrofolate. Can use L-threo-dihydroneopterin and D-erythro-dihydroneopterin as substrates for the formation of 6-hydroxymethyldihydropterin, but it can also catalyze the epimerization of carbon 2' of dihydroneopterin and dihydromonapterin. This is Dihydroneopterin aldolase 2 from Arabidopsis thaliana (Mouse-ear cress).